The chain runs to 246 residues: High mobility group protein 1 (246 aa).

The HMG box DNA-binding region spans 106 to 179; sequence PKKPLTVFFA…NYQREKSKYL (74 aa). Positions 179–246 are disordered; that stretch reads LEAKKNGTLP…KKKDKSNSSI (68 aa). The segment covering 214 to 227 has biased composition (basic and acidic residues); it reads PVEKRPHDDDGSSE. The span at 228-238 shows a compositional bias: basic residues; sequence KKKKKKKKDKK.

Interacts with FPR1. Interacts with an unidentified DNA helicase. Associates with rDNA.

The protein localises to the nucleus. The protein resides in the nucleolus. In terms of biological role, DNA-binding protein that is probably part of the rDNA transcription apparatus. Acts synergetically with the RPA49 subunit of RNA polymerase I during rDNA transcription. May participate in mutagenesis control. This is High mobility group protein 1 (HMO1) from Saccharomyces cerevisiae (strain ATCC 204508 / S288c) (Baker's yeast).